A 374-amino-acid polypeptide reads, in one-letter code: Histidinol-phosphate aminotransferase 2 (374 aa).

Lys227 bears the N6-(pyridoxal phosphate)lysine mark.

This sequence belongs to the class-II pyridoxal-phosphate-dependent aminotransferase family. Histidinol-phosphate aminotransferase subfamily. In terms of assembly, homodimer. Requires pyridoxal 5'-phosphate as cofactor.

The enzyme catalyses L-histidinol phosphate + 2-oxoglutarate = 3-(imidazol-4-yl)-2-oxopropyl phosphate + L-glutamate. It functions in the pathway amino-acid biosynthesis; L-histidine biosynthesis; L-histidine from 5-phospho-alpha-D-ribose 1-diphosphate: step 7/9. The protein is Histidinol-phosphate aminotransferase 2 (hisC2) of Ralstonia nicotianae (strain ATCC BAA-1114 / GMI1000) (Ralstonia solanacearum).